Consider the following 322-residue polypeptide: Acetylglutamate kinase (322 aa).

Substrate is bound by residues 85–86 (GG), Arg107, and Asn211.

Belongs to the acetylglutamate kinase family. ArgB subfamily.

The protein resides in the cytoplasm. It carries out the reaction N-acetyl-L-glutamate + ATP = N-acetyl-L-glutamyl 5-phosphate + ADP. Its pathway is amino-acid biosynthesis; L-arginine biosynthesis; N(2)-acetyl-L-ornithine from L-glutamate: step 2/4. Its function is as follows. Catalyzes the ATP-dependent phosphorylation of N-acetyl-L-glutamate. In Methanosarcina barkeri (strain Fusaro / DSM 804), this protein is Acetylglutamate kinase.